Reading from the N-terminus, the 326-residue chain is 4-hydroxythreonine-4-phosphate dehydrogenase (326 aa).

Positions 130 and 131 each coordinate substrate. A divalent metal cation is bound by residues H160, H205, and H260. The substrate site is built by K268, N277, and R286.

Belongs to the PdxA family. Homodimer. It depends on Zn(2+) as a cofactor. Requires Mg(2+) as cofactor. The cofactor is Co(2+).

It is found in the cytoplasm. It catalyses the reaction 4-(phosphooxy)-L-threonine + NAD(+) = 3-amino-2-oxopropyl phosphate + CO2 + NADH. It participates in cofactor biosynthesis; pyridoxine 5'-phosphate biosynthesis; pyridoxine 5'-phosphate from D-erythrose 4-phosphate: step 4/5. Its function is as follows. Catalyzes the NAD(P)-dependent oxidation of 4-(phosphooxy)-L-threonine (HTP) into 2-amino-3-oxo-4-(phosphooxy)butyric acid which spontaneously decarboxylates to form 3-amino-2-oxopropyl phosphate (AHAP). The sequence is that of 4-hydroxythreonine-4-phosphate dehydrogenase from Aromatoleum aromaticum (strain DSM 19018 / LMG 30748 / EbN1) (Azoarcus sp. (strain EbN1)).